Here is a 199-residue protein sequence, read N- to C-terminus: Dephospho-CoA kinase (199 aa).

One can recognise a DPCK domain in the interval 3–199 (KVGLTGGICS…DLLEFFTLYQ (197 aa)). An ATP-binding site is contributed by 11–16 (CSGKST).

The protein belongs to the CoaE family.

The protein localises to the cytoplasm. It catalyses the reaction 3'-dephospho-CoA + ATP = ADP + CoA + H(+). Its pathway is cofactor biosynthesis; coenzyme A biosynthesis; CoA from (R)-pantothenate: step 5/5. In terms of biological role, catalyzes the phosphorylation of the 3'-hydroxyl group of dephosphocoenzyme A to form coenzyme A. The chain is Dephospho-CoA kinase from Clostridium perfringens (strain 13 / Type A).